An 896-amino-acid chain; its full sequence is NET1-associated nuclear protein 1 (896 aa).

WD repeat units follow at residues 295–334 (WHID…QQFL), 490–542 (LQDP…TNWN), 552–595 (GISV…SNWC), and 605–645 (NHFS…ESLE).

Interacts with snoRNA U3. Interacts with MPP10. Component of the ribosomal small subunit (SSU) processome composed of at least 40 protein subunits and snoRNA U3. In the absence of snoRNA3, forms a complex with other t-UTPs. This complex can associate with pre-18S ribosomal RNAs.

Its subcellular location is the nucleus. It is found in the nucleolus. Its function is as follows. Involved in nucleolar processing of pre-18S ribosomal RNA. Required for optimal pre-ribosomal RNA transcription by RNA polymerase I together with a subset of U3 proteins required for transcription (t-UTPs). The protein is NET1-associated nuclear protein 1 (NAN1) of Saccharomyces cerevisiae (strain ATCC 204508 / S288c) (Baker's yeast).